We begin with the raw amino-acid sequence, 339 residues long: Large ribosomal subunit protein uL11m (339 aa).

It belongs to the universal ribosomal protein uL11 family.

Its subcellular location is the mitochondrion. In Acanthamoeba castellanii (Amoeba), this protein is Large ribosomal subunit protein uL11m (RPL11).